The sequence spans 498 residues: Actin-binding protein WASF2 (498 aa).

Disordered stretches follow at residues 173–203 (KEKR…KEEW) and 240–435 (NVDA…AVSD). Over residues 252-263 (SDSASSPSPSFS) the composition is skewed to low complexity. Residues 298–407 (SHPPPAPPLG…PPPGPPPPPF (110 aa)) show a composition bias toward pro residues. Positions 436 to 453 (ARSDLLSAIRQGFQLRRV) constitute a WH2 domain. Serine 474 is subject to Phosphoserine.

Belongs to the SCAR/WAVE family. In terms of assembly, binds actin and the Arp2/3 complex. Interacts with BAIAP2. Component of the WAVE2 complex composed of ABI1, CYFIP1/SRA1, NCKAP1/NAP1 (NCKAP1l/HEM1 in hematopoietic cells) and WASF2/WAVE2. Directly interacts with BRK1. Interacts with FNBP1L (via the SH3 domain). (Microbial infection) Interacts with human cytomegalovirus protein UL135. As to expression, expressed in all tissues with strongest expression in placenta, lung, and peripheral blood leukocytes, but not in skeletal muscle.

The protein resides in the cytoplasm. It is found in the cytoskeleton. It localises to the cell projection. The protein localises to the lamellipodium. Its subcellular location is the basolateral cell membrane. Functionally, downstream effector molecule involved in the transmission of signals from tyrosine kinase receptors and small GTPases to the actin cytoskeleton. Promotes formation of actin filaments. Part of the WAVE complex that regulates lamellipodia formation. The WAVE complex regulates actin filament reorganization via its interaction with the Arp2/3 complex. The chain is Actin-binding protein WASF2 from Homo sapiens (Human).